We begin with the raw amino-acid sequence, 155 residues long: Cytochrome c-type biogenesis protein CcmE (155 aa).

The Cytoplasmic segment spans residues 1-8 (MNPLRKKR). Residues 9–29 (LLIIVALLAGVGLAVTLALSA) traverse the membrane as a helical; Signal-anchor for type II membrane protein segment. Residues 30–155 (LQENINLFYT…AASPTPVKQG (126 aa)) lie on the Periplasmic side of the membrane. Positions 124 and 128 each coordinate heme.

Belongs to the CcmE/CycJ family.

Its subcellular location is the cell inner membrane. Heme chaperone required for the biogenesis of c-type cytochromes. Transiently binds heme delivered by CcmC and transfers the heme to apo-cytochromes in a process facilitated by CcmF and CcmH. This is Cytochrome c-type biogenesis protein CcmE from Pseudomonas syringae pv. syringae (strain B728a).